The following is a 277-amino-acid chain: Large ribosomal subunit protein uL2 (277 aa).

The segment at 212–277 (RWRGKRPHVR…KFIVRGRKSK (66 aa)) is disordered. Residues 254–277 (TAGKKTRDKKKASTKFIVRGRKSK) show a composition bias toward basic residues.

This sequence belongs to the universal ribosomal protein uL2 family. In terms of assembly, part of the 50S ribosomal subunit. Forms a bridge to the 30S subunit in the 70S ribosome.

In terms of biological role, one of the primary rRNA binding proteins. Required for association of the 30S and 50S subunits to form the 70S ribosome, for tRNA binding and peptide bond formation. It has been suggested to have peptidyltransferase activity; this is somewhat controversial. Makes several contacts with the 16S rRNA in the 70S ribosome. This is Large ribosomal subunit protein uL2 from Leuconostoc citreum (strain KM20).